Here is a 464-residue protein sequence, read N- to C-terminus: tRNA-2-methylthio-N(6)-dimethylallyladenosine synthase (464 aa).

An MTTase N-terminal domain is found at 4–119; that stretch reads RTFHIMTFGC…APQAIERLVQ (116 aa). Residues C13, C48, C82, C158, C162, and C165 each coordinate [4Fe-4S] cluster. One can recognise a Radical SAM core domain in the interval 144–375; sequence GEVPVSAYVN…QEVQNEYSEA (232 aa). The TRAM domain occupies 378 to 461; sequence QAMVGKTVMV…KHSLTGEPAG (84 aa). The tract at residues 393 to 420 is disordered; the sequence is SPKSAAGSGTDAQNAAEESGRTASSWQG.

Belongs to the methylthiotransferase family. MiaB subfamily. In terms of assembly, monomer. It depends on [4Fe-4S] cluster as a cofactor.

The protein localises to the cytoplasm. It catalyses the reaction N(6)-dimethylallyladenosine(37) in tRNA + (sulfur carrier)-SH + AH2 + 2 S-adenosyl-L-methionine = 2-methylsulfanyl-N(6)-dimethylallyladenosine(37) in tRNA + (sulfur carrier)-H + 5'-deoxyadenosine + L-methionine + A + S-adenosyl-L-homocysteine + 2 H(+). Functionally, catalyzes the methylthiolation of N6-(dimethylallyl)adenosine (i(6)A), leading to the formation of 2-methylthio-N6-(dimethylallyl)adenosine (ms(2)i(6)A) at position 37 in tRNAs that read codons beginning with uridine. The protein is tRNA-2-methylthio-N(6)-dimethylallyladenosine synthase of Oleidesulfovibrio alaskensis (strain ATCC BAA-1058 / DSM 17464 / G20) (Desulfovibrio alaskensis).